Consider the following 305-residue polypeptide: MSLSASEKEENNKKMAADKAEMGRKKRAMWERKWKRLDIVKAFASLFVHFLCLLAPFNFTWPALRVALIVYTVGGLGITVSYHRNLAHRSFKVPKWLEYFFAYCGLLAIQGDPIDWVSTHRYHHQFTDSDRDPHSPNEGFWFSHLLWLFDTGYLVEKCGRRTNVEDLKRQWYYKFLQRTVLYHILTFGFLLYYFGGLSFLTWGMGIGVAMEHHVTCLINSLCHVWGSRTWKTNDTSRNVWWLSVFSFGESWHNNHHAFESSARQGLEWWQIDISWYIVRFLEIIGLATDVKLPSESQRRRMAMVR.

The tract at residues 1-20 (MSLSASEKEENNKKMAADKA) is disordered. 2 consecutive transmembrane segments (helical) span residues 39-59 (IVKAFASLFVHFLCLLAPFNF) and 60-80 (TWPALRVALIVYTVGGLGITV). Fe cation-binding residues include H83, H88, H120, H123, and H124. Residues 83–88 (HRNLAH) carry the Histidine box-1 motif. The Histidine box-2 motif lies at 120-124 (HRYHH). Residues 180-200 (VLYHILTFGFLLYYFGGLSFL) traverse the membrane as a helical segment. Positions 223, 252, 255, and 256 each coordinate Fe cation. The Histidine box-3 signature appears at 252–256 (HNNHH). The helical transmembrane segment at 268–288 (WWQIDISWYIVRFLEIIGLAT) threads the bilayer.

This sequence belongs to the fatty acid desaturase type 1 family. Fe cation is required as a cofactor. In terms of tissue distribution, strongly expressed in inflorescence meristems, leaves, and flowers, and weakly in roots and seedpods.

It localises to the endoplasmic reticulum membrane. The protein localises to the plastid. It is found in the chloroplast membrane. Its pathway is lipid metabolism; polyunsaturated fatty acid biosynthesis. Involved in delta-9 desaturation of fatty acids. Involved in the production of very-long-chain fatty acids (VLCFAs). May desaturate chloroplastic monogalactosyl diacylglycerol (MGDG) and alter chloroplast membrane fluidity, which is required to prime a cold acclimation response. The chain is Delta-9 acyl-lipid desaturase 1 from Arabidopsis thaliana (Mouse-ear cress).